A 223-amino-acid polypeptide reads, in one-letter code: MAENCTLDSEQAVLLFKEYNLFITAFLLFLTILLQYGYATRSRTIYILKMIVLWCFWPLNIAVGVISCIYPPNTGGLVAAIILTVFACLSFVGYWIQSCRLFKRCRSWWSFNPESNAVGSILLTNGQQCNFAIESVPMVLAPIIKNGVLYCEGQWLAKCEPDHLPKDIFVCTPDRRNIYRMVQKYTGDQSGNKKRFATFVYAKQSVDTGELESVATGGSSLYT.

Residues 1-18 (MAENCTLDSEQAVLLFKE) are Virion surface-facing. Residues 19-39 (YNLFITAFLLFLTILLQYGYA) form a helical membrane-spanning segment. The Intravirion portion of the chain corresponds to 40–49 (TRSRTIYILK). Residues 50-70 (MIVLWCFWPLNIAVGVISCIY) form a helical membrane-spanning segment. Residues 71–75 (PPNTG) lie on the Virion surface side of the membrane. A helical transmembrane segment spans residues 76–96 (GLVAAIILTVFACLSFVGYWI). The Intravirion portion of the chain corresponds to 97–223 (QSCRLFKRCR…VATGGSSLYT (127 aa)).

The protein belongs to the gammacoronaviruses M protein family. As to quaternary structure, homomultimer. Interacts with envelope E protein in the budding compartment of the host cell, which is located between endoplasmic reticulum and the Golgi complex. Forms a complex with HE and S proteins. Interacts with nucleocapsid N protein. This interaction probably participates in RNA packaging into the virus.

Its subcellular location is the virion membrane. The protein localises to the host Golgi apparatus membrane. Its function is as follows. Component of the viral envelope that plays a central role in virus morphogenesis and assembly via its interactions with other viral proteins. The sequence is that of Membrane protein from Gallus gallus (Chicken).